A 1002-amino-acid polypeptide reads, in one-letter code: Lon protease homolog, mitochondrial (1002 aa).

Positions 102 to 313 constitute a Lon N-terminal domain; that stretch reads VIALPLPHRP…LTLELVKKEM (212 aa). 468-475 serves as a coordination point for ATP; it reads GPPGVGKT. The region spanning 811–995 is the Lon proteolytic domain; that stretch reads QTPVGVVMGL…NEIFDIAFQS (185 aa). Catalysis depends on residues serine 901 and lysine 944.

It belongs to the peptidase S16 family. Homohexamer or homoheptamer. Organized in a ring with a central cavity.

Its subcellular location is the mitochondrion matrix. The enzyme catalyses Hydrolysis of proteins in presence of ATP.. Its function is as follows. ATP-dependent serine protease that mediates the selective degradation of misfolded, unassembled or oxidatively damaged polypeptides as well as certain short-lived regulatory proteins in the mitochondrial matrix. May also have a chaperone function in the assembly of inner membrane protein complexes. Participates in the regulation of mitochondrial gene expression and in the maintenance of the integrity of the mitochondrial genome. Binds to mitochondrial DNA in a site-specific manner. The chain is Lon protease homolog, mitochondrial from Oryza sativa subsp. japonica (Rice).